The chain runs to 522 residues: Gypsy retrotransposon integrase-like protein 1 (522 aa).

In terms of domain architecture, Integrase catalytic spans 135–292; that stretch reads KVENPWSLVT…TPYFQMFSRN (158 aa). Ser502 is modified (phosphoserine).

As to expression, widely expressed. Also found in tumors originating from parathyroid gland, colon, stomach, bladder, uterus and prostate.

In Homo sapiens (Human), this protein is Gypsy retrotransposon integrase-like protein 1 (GIN1).